A 354-amino-acid chain; its full sequence is Probable L-ascorbate-6-phosphate lactonase UlaG (354 aa).

This sequence belongs to the UlaG family. It depends on a divalent metal cation as a cofactor.

It is found in the cytoplasm. It carries out the reaction L-ascorbate 6-phosphate + H2O = 3-dehydro-L-gulonate 6-phosphate. Its pathway is cofactor degradation; L-ascorbate degradation; D-xylulose 5-phosphate from L-ascorbate: step 1/4. Probably catalyzes the hydrolysis of L-ascorbate-6-P into 3-keto-L-gulonate-6-P. Is essential for L-ascorbate utilization under anaerobic conditions. The polypeptide is Probable L-ascorbate-6-phosphate lactonase UlaG (Escherichia coli (strain SMS-3-5 / SECEC)).